We begin with the raw amino-acid sequence, 321 residues long: Methionyl-tRNA formyltransferase (321 aa).

(6S)-5,6,7,8-tetrahydrofolate is bound at residue 111-114 (GLLP).

The protein belongs to the Fmt family.

The enzyme catalyses L-methionyl-tRNA(fMet) + (6R)-10-formyltetrahydrofolate = N-formyl-L-methionyl-tRNA(fMet) + (6S)-5,6,7,8-tetrahydrofolate + H(+). Functionally, attaches a formyl group to the free amino group of methionyl-tRNA(fMet). The formyl group appears to play a dual role in the initiator identity of N-formylmethionyl-tRNA by promoting its recognition by IF2 and preventing the misappropriation of this tRNA by the elongation apparatus. This is Methionyl-tRNA formyltransferase from Chlamydia abortus (strain DSM 27085 / S26/3) (Chlamydophila abortus).